The sequence spans 657 residues: Methylenetetrahydrofolate reductase 1 (657 aa).

The active-site Proton donor/acceptor is the Glu-18. NAD(+) contacts are provided by residues 18–23 (EFFPPK) and 49–50 (TW). FAD contacts are provided by residues 49 to 50 (TW), His-78, and 108 to 110 (RGD). Residue Asp-110 participates in substrate binding. Ser-120 carries the post-translational modification Phosphoserine. FAD contacts are provided by residues 129-130 (YA), Tyr-152, Asp-171, and Lys-178. Substrate-binding residues include Gln-189 and Tyr-286. The residue at position 301 (Ser-301) is a Phosphoserine. Positions 308-329 (VNESSEEEGEDETSGEIGSIEN) are disordered. Positions 311–321 (SSEEEGEDETS) are enriched in acidic residues. Position 358 is a phosphoserine (Ser-358).

This sequence belongs to the methylenetetrahydrofolate reductase family. Requires FAD as cofactor.

It carries out the reaction (6S)-5-methyl-5,6,7,8-tetrahydrofolate + NADP(+) = (6R)-5,10-methylene-5,6,7,8-tetrahydrofolate + NADPH + H(+). It catalyses the reaction (6S)-5-methyl-5,6,7,8-tetrahydrofolate + NAD(+) = (6R)-5,10-methylene-5,6,7,8-tetrahydrofolate + NADH + H(+). The protein operates within one-carbon metabolism; tetrahydrofolate interconversion. This is Methylenetetrahydrofolate reductase 1 (MET12) from Saccharomyces cerevisiae (strain ATCC 204508 / S288c) (Baker's yeast).